A 321-amino-acid polypeptide reads, in one-letter code: Glucokinase (321 aa).

8–13 (GDVGGT) serves as a coordination point for ATP.

The protein belongs to the bacterial glucokinase family.

The protein resides in the cytoplasm. The enzyme catalyses D-glucose + ATP = D-glucose 6-phosphate + ADP + H(+). This chain is Glucokinase, found in Escherichia coli O127:H6 (strain E2348/69 / EPEC).